Here is a 486-residue protein sequence, read N- to C-terminus: MEPYALTMHELHDLLVRKELSVTETLTSFLTRIETLDPRLNSYLSVLAESSLAEAGRFDRGERDLHASPLAGIPLAIKDVLCMQGTVTTCGSRILENFVPPYDGTVIARLREAGAIFLGKTNMDEFAMGSSTENSAYGVTRNPWDRERVPGGSSGGSAAAVAADLCSGSLGTDTGGSIRQPASFCGVVGLKPTYGRVSRFGLVAFASSLDQIGPITKDVEDAAILLQAIAGHDRRDSTSVDHPVPDYRASLREPIKGLRLGIPKEYFVHGMHPEIADSVQRAINVCLQLGAEVGEVSLPHTGYGVAAYYIIAPAEASSNLARYDGVKYGLRVPDARDLIGMYRTSRSQGFGAEVKRRIMLGTYVLSAGYYDAYYTKASQARTLIRKDFLDAFDSFDALLAPVAPVPAFKIGEKSDDPLQMYLNDALTLPASLAGVPGISVPCGFSGEGLPIGLQILGPHFREDLLLRIAYQFEQATAHHLARPDSI.

Active-site charge relay system residues include lysine 78 and serine 153. The active-site Acyl-ester intermediate is serine 177.

This sequence belongs to the amidase family. GatA subfamily. In terms of assembly, heterotrimer of A, B and C subunits.

It catalyses the reaction L-glutamyl-tRNA(Gln) + L-glutamine + ATP + H2O = L-glutaminyl-tRNA(Gln) + L-glutamate + ADP + phosphate + H(+). In terms of biological role, allows the formation of correctly charged Gln-tRNA(Gln) through the transamidation of misacylated Glu-tRNA(Gln) in organisms which lack glutaminyl-tRNA synthetase. The reaction takes place in the presence of glutamine and ATP through an activated gamma-phospho-Glu-tRNA(Gln). The polypeptide is Glutamyl-tRNA(Gln) amidotransferase subunit A (Syntrophobacter fumaroxidans (strain DSM 10017 / MPOB)).